A 205-amino-acid polypeptide reads, in one-letter code: Molybdenum cofactor guanylyltransferase (205 aa).

GTP-binding positions include 14-16 (LAG), Lys-27, Asp-77, and Asp-107. Residue Asp-107 participates in Mg(2+) binding.

The protein belongs to the MobA family. Monomer. Mg(2+) serves as cofactor.

It is found in the cytoplasm. It carries out the reaction Mo-molybdopterin + GTP + H(+) = Mo-molybdopterin guanine dinucleotide + diphosphate. In terms of biological role, transfers a GMP moiety from GTP to Mo-molybdopterin (Mo-MPT) cofactor (Moco or molybdenum cofactor) to form Mo-molybdopterin guanine dinucleotide (Mo-MGD) cofactor. The sequence is that of Molybdenum cofactor guanylyltransferase from Burkholderia lata (strain ATCC 17760 / DSM 23089 / LMG 22485 / NCIMB 9086 / R18194 / 383).